We begin with the raw amino-acid sequence, 351 residues long: N-acetyl-gamma-glutamyl-phosphate reductase (351 aa).

Cys-154 is an active-site residue.

Belongs to the NAGSA dehydrogenase family. Type 1 subfamily.

It is found in the cytoplasm. It catalyses the reaction N-acetyl-L-glutamate 5-semialdehyde + phosphate + NADP(+) = N-acetyl-L-glutamyl 5-phosphate + NADPH + H(+). It functions in the pathway amino-acid biosynthesis; L-arginine biosynthesis; N(2)-acetyl-L-ornithine from L-glutamate: step 3/4. In terms of biological role, catalyzes the NADPH-dependent reduction of N-acetyl-5-glutamyl phosphate to yield N-acetyl-L-glutamate 5-semialdehyde. This is N-acetyl-gamma-glutamyl-phosphate reductase from Synechocystis sp. (strain ATCC 27184 / PCC 6803 / Kazusa).